Reading from the N-terminus, the 307-residue chain is Carbamate kinase (307 aa).

This sequence belongs to the carbamate kinase family.

The protein resides in the cytoplasm. It carries out the reaction hydrogencarbonate + NH4(+) + ATP = carbamoyl phosphate + ADP + H2O + H(+). The protein operates within metabolic intermediate metabolism; carbamoyl phosphate degradation; CO(2) and NH(3) from carbamoyl phosphate: step 1/1. Carbamate kinase involved in the arginine deiminase pathway of fermentative arginine utilization. This is Carbamate kinase (arcC) from Halobacterium salinarum (strain ATCC 700922 / JCM 11081 / NRC-1) (Halobacterium halobium).